The following is a 330-amino-acid chain: Phenylalanine--tRNA ligase alpha subunit (330 aa).

Glutamate 246 lines the Mg(2+) pocket.

The protein belongs to the class-II aminoacyl-tRNA synthetase family. Phe-tRNA synthetase alpha subunit type 1 subfamily. As to quaternary structure, tetramer of two alpha and two beta subunits. Mg(2+) serves as cofactor.

It is found in the cytoplasm. The catalysed reaction is tRNA(Phe) + L-phenylalanine + ATP = L-phenylalanyl-tRNA(Phe) + AMP + diphosphate + H(+). This chain is Phenylalanine--tRNA ligase alpha subunit, found in Sulfurovum sp. (strain NBC37-1).